We begin with the raw amino-acid sequence, 465 residues long: Putative F-box/FBD/LRR-repeat protein At1g22000 (465 aa).

The region spanning 28 to 74 is the F-box domain; the sequence is ETRICALPDDLLLQILPHVPTKEAVATSILSKQWRYVWLMLPKLEFK. LRR repeat units lie at residues 154-181, 182-207, 210-230, 248-273, and 339-365; these read CLTL…SLHY, VVYK…SVHS, DDNL…NYDE, NEVE…HLSE, and ISLV…TIDN. The FBD domain maps to 373-424; the sequence is SWNQPSSIPGCLLSHLETFRWRGYGGREDAKKLLMTYILANSKCLKTVEISL.

The sequence is that of Putative F-box/FBD/LRR-repeat protein At1g22000 from Arabidopsis thaliana (Mouse-ear cress).